The following is a 243-amino-acid chain: Probable transcriptional regulatory protein BRE_29 (243 aa).

It belongs to the TACO1 family.

The protein localises to the cytoplasm. The polypeptide is Probable transcriptional regulatory protein BRE_29 (Borrelia recurrentis (strain A1)).